A 122-amino-acid polypeptide reads, in one-letter code: Large ribosomal subunit protein uL14 (122 aa).

Belongs to the universal ribosomal protein uL14 family. Part of the 50S ribosomal subunit. Forms a cluster with proteins L3 and L19. In the 70S ribosome, L14 and L19 interact and together make contacts with the 16S rRNA in bridges B5 and B8.

In terms of biological role, binds to 23S rRNA. Forms part of two intersubunit bridges in the 70S ribosome. The chain is Large ribosomal subunit protein uL14 from Methylococcus capsulatus (strain ATCC 33009 / NCIMB 11132 / Bath).